Reading from the N-terminus, the 312-residue chain is Flavonol 3-sulfotransferase (312 aa).

Position 59–64 (59–64 (KSGTTW)) interacts with 3'-phosphoadenylyl sulfate. The Proton acceptor role is filled by H119. Residues R141, S149, Y207, and 277 to 279 (RKG) contribute to the 3'-phosphoadenylyl sulfate site.

It belongs to the sulfotransferase 1 family. Highest in shoot tips and lowest in mature leaves and roots.

It is found in the cytoplasm. Functionally, sulfotransferase that utilizes 3'-phospho-5'-adenylyl sulfate (PAPS) as sulfonate donor to catalyze the sulfate conjugation of quercetin, rhamnetin and isorhamnetin but not kaempferol. O-sulfation of position 3 of flavonol. May play a role in auxin transport. This Flaveria bidentis (Coastal plain yellowtops) protein is Flavonol 3-sulfotransferase.